The sequence spans 135 residues: UPF0102 protein Aave_0630 (135 aa).

Residues 1 to 21 (MGILEKKTAGPGGAARKTTTR) form a disordered region.

This sequence belongs to the UPF0102 family.

In Paracidovorax citrulli (strain AAC00-1) (Acidovorax citrulli), this protein is UPF0102 protein Aave_0630.